We begin with the raw amino-acid sequence, 425 residues long: MKQVTEQAEDFVDTRSSGTEIREFEDLRSDSSQIRMFDTWEDYGLKEDLLKGIYSIGFETPSFIQKAAIQPIIDGRDIRAQAQSGTGKTGAFAVAALQICDMSQDVTQILVLASTREIAAQNAARFEDLGCFMGARVALLSGGSPIAADKVALEKKPHIVVGTPGRVEHMININELSMDNIKLFVIDEADEMLKAGFQEQVKSIFRRITNKDEVQIAMFSATYDEEELRVSEEILINPVIIDLRYNDQTLKGIRQYFIDLRKEPPFRKGREDYLLPKLVTLYDIFRKQRLGQSIVFINSKEDARIVYDWLIRHEWECELISAELTQAERERTLNRFRGGTGRCLISSGLLSRGIDIQNLSVVFCLDVPSFERKSTYIHRIGRSGRYGRKGIAINIVYEHELKNLKAIERFYNTTIKELPADFSFQ.

The short motif at 38–66 (DTWEDYGLKEDLLKGIYSIGFETPSFIQK) is the Q motif element. The 173-residue stretch at 69-241 (IQPIIDGRDI…EEILINPVII (173 aa)) folds into the Helicase ATP-binding domain. Position 82 to 89 (82 to 89 (AQSGTGKT)) interacts with ATP. The short motif at 187–190 (DEAD) is the DEAD box element. A Helicase C-terminal domain is found at 252–425 (GIRQYFIDLR…KELPADFSFQ (174 aa)).

This sequence belongs to the DEAD box helicase family. eIF4A subfamily. Component of the eIF4F complex, which composition varies with external and internal environmental conditions. It is composed of at least eIF4A, eIF4E and eIF4G.

The protein localises to the cytoplasm. It carries out the reaction ATP + H2O = ADP + phosphate + H(+). ATP-dependent RNA helicase which is a subunit of the eIF4F complex involved in cap recognition and is required for mRNA binding to ribosome. In the current model of translation initiation, eIF4A unwinds RNA secondary structures in the 5'-UTR of mRNAs which is necessary to allow efficient binding of the small ribosomal subunit, and subsequent scanning for the initiator codon. This is ATP-dependent RNA helicase eIF4A (TIF1) from Encephalitozoon cuniculi (strain GB-M1) (Microsporidian parasite).